The chain runs to 2075 residues: Autophagy-related protein 2 homolog B (2075 aa).

The region spanning 13 to 107 is the Chorein N-terminal domain; that stretch reads ACRYLLQRYL…LEMVFRPRPR (95 aa). Phosphoserine is present on residues Ser255, Ser379, Ser496, Ser839, Ser885, Ser898, and Ser1007. Residue Tyr1011 is modified to Phosphotyrosine. Ser1015 and Ser1017 each carry phosphoserine. Position 1021 is a phosphothreonine (Thr1021). The disordered stretch occupies residues 1373–1403; it reads KAEMKPGVPQRKPKVDSSARSSSHGPVLPEA. Residue Ser1525 is modified to Phosphoserine. 3 disordered regions span residues 1570–1593, 1759–1792, and 2055–2075; these read TSPA…GRHT, EPNL…EDVS, and RNQI…HGED. Over residues 1578-1587 the composition is skewed to polar residues; the sequence is PHSSPSQTPT. A compositionally biased stretch (basic and acidic residues) spans 2058–2075; that stretch reads IRPDVRQDESQKWRHGED.

This sequence belongs to the ATG2 family. As to quaternary structure, interacts with WDR45/WIPI4.

It localises to the preautophagosomal structure membrane. Its subcellular location is the lipid droplet. The protein localises to the endoplasmic reticulum membrane. It catalyses the reaction a 1,2-diacyl-sn-glycero-3-phospho-L-serine(in) = a 1,2-diacyl-sn-glycero-3-phospho-L-serine(out). The catalysed reaction is a 1,2-diacyl-sn-glycero-3-phosphoethanolamine(in) = a 1,2-diacyl-sn-glycero-3-phosphoethanolamine(out). Lipid transfer protein required for both autophagosome formation and regulation of lipid droplet morphology and dispersion. Tethers the edge of the isolation membrane (IM) to the endoplasmic reticulum (ER) and mediates direct lipid transfer from ER to IM for IM expansion. Binds to the ER exit site (ERES), which is the membrane source for autophagosome formation, and extracts phospholipids from the membrane source and transfers them to ATG9 (ATG9A or ATG9B) to the IM for membrane expansion. Lipid transfer activity is enhanced by WDR45/WIPI4, which promotes ATG2B-association with phosphatidylinositol 3-monophosphate (PI3P)-containing membranes. The protein is Autophagy-related protein 2 homolog B of Mus musculus (Mouse).